Here is a 189-residue protein sequence, read N- to C-terminus: Mu-like prophage FluMu protein gp27 (189 aa).

The protein to phage Mu protein gp27.

The protein is Mu-like prophage FluMu protein gp27 of Haemophilus influenzae (strain ATCC 51907 / DSM 11121 / KW20 / Rd).